A 317-amino-acid polypeptide reads, in one-letter code: Glycerol-3-phosphate dehydrogenase [NAD(P)+] (317 aa).

NADPH is bound by residues W20, R40, R41, and K88. 2 residues coordinate sn-glycerol 3-phosphate: K88 and G116. Residue S120 participates in NADPH binding. Sn-glycerol 3-phosphate is bound by residues K171, D224, S234, R235, and N236. The Proton acceptor role is filled by K171. R235 is a binding site for NADPH. E261 contacts NADPH.

Belongs to the NAD-dependent glycerol-3-phosphate dehydrogenase family.

It is found in the cytoplasm. It catalyses the reaction sn-glycerol 3-phosphate + NAD(+) = dihydroxyacetone phosphate + NADH + H(+). The enzyme catalyses sn-glycerol 3-phosphate + NADP(+) = dihydroxyacetone phosphate + NADPH + H(+). It participates in membrane lipid metabolism; glycerophospholipid metabolism. Catalyzes the reduction of the glycolytic intermediate dihydroxyacetone phosphate (DHAP) to sn-glycerol 3-phosphate (G3P), the key precursor for phospholipid synthesis. The chain is Glycerol-3-phosphate dehydrogenase [NAD(P)+] from Synechocystis sp. (strain ATCC 27184 / PCC 6803 / Kazusa).